Here is a 514-residue protein sequence, read N- to C-terminus: Maturase K (514 aa).

This sequence belongs to the intron maturase 2 family. MatK subfamily.

The protein localises to the plastid. It is found in the chloroplast. Functionally, usually encoded in the trnK tRNA gene intron. Probably assists in splicing its own and other chloroplast group II introns. The polypeptide is Maturase K (Erythronium grandiflorum (Yellow avalanche-lily)).